Consider the following 476-residue polypeptide: Exoglucanase-6A (476 aa).

The signal sequence occupies residues 1 to 16; that stretch reads MAKFFLTAAFAAAALA. Disulfide bonds link Cys-33–Cys-50 and Cys-44–Cys-60. Residues 33-60 form the CBM1 domain; the sequence is CGGIGFNGPTCCQSGSTCVKQNDWYSQC. Residues 67–94 form a disordered region; sequence TTTSTTSTSSSSTTSRATSTTRTGGVTS. An O-linked (Man...) threonine glycan is attached at Thr-144. The O-linked (Man...) serine glycan is linked to Ser-153. Positions 163 and 165 each coordinate substrate. An N-linked (GlcNAc...) asparagine glycan is attached at Asn-167. Positions 200–222 are substrate binding loop 1; it reads YDLPDRDCAAAASNGEWAIANNG. Asp-252 (proton donor) is an active-site residue. The substrate site is built by His-297, Trp-300, Asn-336, Trp-397, Lys-425, and Glu-429. The tract at residues 423 to 461 is substrate binding loop 2; sequence WVKPGGECDGTSDTTAARYDYHCGLEDALKPAPEAGQWF. Asp-431 serves as the catalytic Proton acceptor.

It belongs to the glycosyl hydrolase 6 (cellulase A) family. Monomer.

It carries out the reaction Hydrolysis of (1-&gt;4)-beta-D-glucosidic linkages in cellulose and cellotetraose, releasing cellobiose from the non-reducing ends of the chains.. Functionally, plays a central role in the recycling of plant biomass. The biological conversion of cellulose to glucose generally requires three types of hydrolytic enzymes: (1) Endoglucanases which cut internal beta-1,4-glucosidic bonds; (2) Exocellobiohydrolases that cut the disaccharide cellobiose from the non-reducing end of the cellulose polymer chain; (3) Beta-1,4-glucosidases which hydrolyze the cellobiose and other short cello-oligosaccharides to glucose. This is Exoglucanase-6A from Humicola insolens (Soft-rot fungus).